The following is a 90-amino-acid chain: Small ribosomal subunit protein uS15c (90 aa).

Belongs to the universal ribosomal protein uS15 family. As to quaternary structure, part of the 30S ribosomal subunit.

It is found in the plastid. The protein localises to the chloroplast. This chain is Small ribosomal subunit protein uS15c (rps15), found in Secale cereale (Rye).